Here is a 474-residue protein sequence, read N- to C-terminus: Hepatocyte nuclear factor 4-alpha (474 aa).

Positions 57 to 132 form a DNA-binding region, nuclear receptor; the sequence is SALCAICGDR…AGMKKEAVQN (76 aa). 2 consecutive NR C4-type zinc fingers follow at residues 60 to 80 and 96 to 120; these read CAICGDRATGKHYGASSCDGC and CRFSRQCVVDKDKRNQCRYCRLKKC. Ser-142 and Ser-143 each carry phosphoserine. Tyr-144 carries the post-translational modification Phosphotyrosine. Residues 147-377 form the NR LBD domain; it reads SSLPSINALL…NLLQEMLLGG (231 aa). The residue at position 166 (Thr-166) is a Phosphothreonine. Ser-167 carries the post-translational modification Phosphoserine. Residues Lys-234 and Lys-307 each participate in a glycyl lysine isopeptide (Lys-Gly) (interchain with G-Cter in ubiquitin) cross-link. A Phosphoserine; by AMPK modification is found at Ser-313. The 9aaTAD motif lies at 368–376; that stretch reads NLLQEMLLG. Residues 419–447 are disordered; that stretch reads EWPRPRGQAATPETPQPSPPGGSGSEPYK. Thr-429 and Thr-432 each carry phosphothreonine. Ser-436 is subject to Phosphoserine. Lys-458 carries the post-translational modification N6-acetyllysine.

Belongs to the nuclear hormone receptor family. NR2 subfamily. In terms of assembly, homodimerization is required for HNF4-alpha to bind to its recognition site. Interacts with CLOCK, BMAL1, CRY1, CRY2, PER1 and PER2. Interacts with NR0B2/SHP; the resulting heterodimer is transcriptionally inactive. Interacts with DDX3X; this interaction disrupts the interaction between HNF4 and NR0B2 that forms inactive heterodimers and enhances the formation of active HNF4 homodimers. In terms of processing, phosphorylated on tyrosine residue(s); phosphorylation is important for its DNA-binding activity. Phosphorylation may directly or indirectly play a regulatory role in the subnuclear distribution. Phosphorylation at Ser-313 by AMPK reduces the ability to form homodimers and bind DNA. Post-translationally, acetylation at Lys-458 lowers transcriptional activation by about two-fold.

It is found in the nucleus. Transcriptional regulator which controls the expression of hepatic genes during the transition of endodermal cells to hepatic progenitor cells, facilitating the recruitment of RNA pol II to the promoters of target genes. Activates the transcription of CYP2C38. Represses the CLOCK-BMAL1 transcriptional activity and is essential for circadian rhythm maintenance and period regulation in the liver and colon cells. This Homo sapiens (Human) protein is Hepatocyte nuclear factor 4-alpha (HNF4A).